Consider the following 822-residue polypeptide: MDINLDPSRDDLPLMANTSHLLVKHYVLDLDVDFGSRVLEGNIVLFFGDGNRCKKQSSSSQETFQMESEEAYILRTAEPCHVPKMDSNTFSPKMGHREFAVFGKSDQDAFDNDGNHDNKEHDSESSSSKYCCDTGNHGREDFLLVLDCCDLSVLKVEEVDVAAVPDLEKFTKAPNLTAAPEKRRCEIVRDLVALPADAWREQLDCYTRCSQAPGCGELLFDSDKWSLQIRKKGVPTAADFPHAIRIWYKTKPEGQSVTWTSDQDGRPCVYTMGSPINNRALFPCQEPPVAMSTWQATVRAAASFVVLMSGEKSAKPTPLREGYMSWHYYVTMPMPASTFTIAVGCWTEMKPKTSPLDDLTEHTLPLRPSDADFRYGNTCSHMEYPCRFQSASAATQNIIPYRVFAPVCLEGACREALLWLIPSCLSAAHSVLGTHPFSRLDILIVPTNFPSLGMASPHIIFLSQSTLTGTSHLCGTRLCHEIAHAWFGLAIGARDWTEEWLSEGFATHLEDIFWAEAQQLPPHEALEQQELRACLRWHRLQDELQNSPEGMQVLRPNKEKTGHVSASGASVVKNGLNPEKGFMQVHYLKGYFLLRFLARTLGEETYFPFLRKFVHLFHGQLILSQDFLQMLLESIPENKRFGLSVENIVGDWLECPGIPKALQEERKAKDCSPSRLVRQVGSEVAKWIRVNRRPGKRQRRKREAAFEKLSPDQIVLLLEWLLEQKTLSPQTLHRLQQTYHLQEQDAEVRHRWCELVIKHKYTKAYDQVKRFLQEDQAMGIYLYGELMVSEDARLQQLAHRCFELVKGHMDKASAQVVTEMLF.

Residue His480 participates in Zn(2+) binding. Residue Glu481 is the Proton acceptor of the active site. Residues His484 and Glu503 each contribute to the Zn(2+) site. The Nucleolar localization signal signature appears at Arg692–Arg702.

It belongs to the peptidase M1 family. Zn(2+) serves as cofactor.

It is found in the nucleus. It localises to the nucleolus. Functionally, aminopeptidase which catalyzes the hydrolysis of amino acid residues from the N-terminus of peptide or protein substrates. The protein is Aminopeptidase O (Aopep) of Rattus norvegicus (Rat).